Here is a 525-residue protein sequence, read N- to C-terminus: MSNIHEHKILILDFGSQYTQLIARRIREIGVYCELWAWDVSEEQIREFAPNGIILAGGPESVTAENSPRAPEYVFNAGVPVLGICYGMQTMSEQLGGKVIQGVGEGEFGYAQVEVQTESALFKAIEDAVSETGKPLLDVWMSHGDKVSAIPEGFVAVAKTETCPFAAMANEDKQFYGVQFHPEVTHTRQGKRMLEHFALEICACAANWKPASIIEDAIERLKAQIGDDEVILGLSGGVDSSVVAMLLHRAIGDKLTCVFVDNGLLRLNEAEQVMEMFGDHFGLNIVHVDAENRFLDAMAGEAEPEAKRKIIGRVFVEIFDEESKKCVNAKWLAQGTIYPDVIESAGSATGKAHCIKSHHNVGGLPDDMEMGLVEPLRELFKDEVRKIGLELGLPYNMLYRHPFPGPGLGVRVLGEVKKEYCDLLRLADAIFIEELHKADLYNKVSQAFTVFLPVRSVGVMGDGRKYDWVVSLRAVETIDFMTAHWAHLPYDFLGRVSNRIINEVNGISRVVYDISGKPPATIEWE.

Residues 8–207 (KILILDFGSQ…ALEICACAAN (200 aa)) form the Glutamine amidotransferase type-1 domain. Cys85 functions as the Nucleophile in the catalytic mechanism. Active-site residues include His181 and Glu183. The GMPS ATP-PPase domain maps to 208–400 (WKPASIIEDA…LGLPYNMLYR (193 aa)). 235-241 (SGGVDSS) provides a ligand contact to ATP.

Homodimer.

The enzyme catalyses XMP + L-glutamine + ATP + H2O = GMP + L-glutamate + AMP + diphosphate + 2 H(+). The protein operates within purine metabolism; GMP biosynthesis; GMP from XMP (L-Gln route): step 1/1. Its function is as follows. Catalyzes the synthesis of GMP from XMP. The protein is GMP synthase [glutamine-hydrolyzing] of Shewanella halifaxensis (strain HAW-EB4).